A 620-amino-acid chain; its full sequence is MAU2 chromatid cohesion factor homolog (620 aa).

TPR repeat units lie at residues 90–123 (FDTA…SQHN), 445–478 (GSFY…ANAE), and 485–518 (SCSL…ASKI).

It belongs to the SCC4/mau-2 family. Component of the cohesin loading complex.

The protein resides in the nucleus. Its subcellular location is the nucleoplasm. Its function is as follows. Required for association of the cohesin complex with chromatin during interphase. Plays a role in sister chromatid cohesion and normal progression through prometaphase. This is MAU2 chromatid cohesion factor homolog from Aedes aegypti (Yellowfever mosquito).